A 322-amino-acid polypeptide reads, in one-letter code: Extracellular metalloprotease AFUA_1G07730 (322 aa).

Positions 1–22 (MLPFNSCVYVLLIISLMSNCRA) are cleaved as a signal peptide. Asn-123 and Asn-197 each carry an N-linked (GlcNAc...) asparagine glycan. His-233 serves as a coordination point for Zn(2+). The active site involves Glu-234. His-237 lines the Zn(2+) pocket. Cys-272 and Cys-299 are joined by a disulfide.

Belongs to the peptidase M43B family.

The protein resides in the secreted. Functionally, secreted metalloproteinase that allows assimilation of proteinaceous substrates. Plays a pivotal role as a pathogenicity determinant during infections and contributes to the ability of the pathogen to persist within the mammalian host. This Aspergillus fumigatus (strain ATCC MYA-4609 / CBS 101355 / FGSC A1100 / Af293) (Neosartorya fumigata) protein is Extracellular metalloprotease AFUA_1G07730.